The chain runs to 1394 residues: DNA-directed RNA polymerase subunit beta' (1394 aa).

Positions 70, 72, 85, and 88 each coordinate Zn(2+). Mg(2+) is bound by residues D470, D472, and D474. The Zn(2+) site is built by C815, C889, C896, and C899.

It belongs to the RNA polymerase beta' chain family. As to quaternary structure, the RNAP catalytic core consists of 2 alpha, 1 beta, 1 beta' and 1 omega subunit. When a sigma factor is associated with the core the holoenzyme is formed, which can initiate transcription. The cofactor is Mg(2+). Zn(2+) serves as cofactor.

The enzyme catalyses RNA(n) + a ribonucleoside 5'-triphosphate = RNA(n+1) + diphosphate. In terms of biological role, DNA-dependent RNA polymerase catalyzes the transcription of DNA into RNA using the four ribonucleoside triphosphates as substrates. This chain is DNA-directed RNA polymerase subunit beta', found in Anaeromyxobacter dehalogenans (strain 2CP-C).